A 294-amino-acid chain; its full sequence is Bifunctional protein FolD (294 aa).

NADP(+) is bound by residues 166–168 (GRS), Ser191, and Ile232.

It belongs to the tetrahydrofolate dehydrogenase/cyclohydrolase family. As to quaternary structure, homodimer.

It catalyses the reaction (6R)-5,10-methylene-5,6,7,8-tetrahydrofolate + NADP(+) = (6R)-5,10-methenyltetrahydrofolate + NADPH. It carries out the reaction (6R)-5,10-methenyltetrahydrofolate + H2O = (6R)-10-formyltetrahydrofolate + H(+). The protein operates within one-carbon metabolism; tetrahydrofolate interconversion. Catalyzes the oxidation of 5,10-methylenetetrahydrofolate to 5,10-methenyltetrahydrofolate and then the hydrolysis of 5,10-methenyltetrahydrofolate to 10-formyltetrahydrofolate. This chain is Bifunctional protein FolD, found in Bradyrhizobium sp. (strain BTAi1 / ATCC BAA-1182).